Consider the following 477-residue polypeptide: MSRFSGALQLTDLDDFITPSQECIKPVTVDKTATSKTGAKITVQEDGYYEESESGKQKLQKVEITLQDCLACSGCITSAESVLITQQSEEELLKVLRENAKVKATGDMEQVRTIVFTIATQPLLSLAHRYQLSAEETARHLAGYFRSLGVDYVLCTKVADDLALLECQQEFVERYRDNEELTMLSSSCPGWVCYAEKTHGNFILPYIATTRSPQQIMGVLVKQFLAEKLNIPGSRIYHVTVMPCYDKKLEASRMDFYSEVNESRDVDCVITSVEVEQMLNEDERSLSEHEASDLDWPWSEQRPESMVWSHEATLSGGYAEHIFKFAAKELFNEAPPTELSFKQLRNRDFREISLEKDDKTVLKFAIANGFRNIQNLVQKLKRGKGASYHFVEVMACPSGCINGGAQVRPTTGQHVRELTQQLEELYKKLPRSQPDNAHTKLIYRDFLDGSHTDKSNELLHTSYHAVEKLSTALNIKW.

Residues C23, C69, C72, C75, C188, C244, C396, and C400 each contribute to the [4Fe-4S] cluster site.

It belongs to the NARF family.

Functionally, component of the cytosolic iron-sulfur (Fe/S) protein assembly machinery. Required for maturation of extramitochondrial Fe/S proteins. The protein is Probable cytosolic Fe-S cluster assembly factor GL21135 of Drosophila persimilis (Fruit fly).